The primary structure comprises 105 residues: Resistin-like beta (105 aa).

The N-terminal stretch at 1 to 23 (MKPTLCFLFILVSLFPLIVPGNA) is a signal peptide. Cystine bridges form between C49-C102, C61-C101, C70-C87, C72-C89, and C76-C91.

It belongs to the resistin/FIZZ family. Homodimer; disulfide-linked. Heterodimer with RETNLG. Strongly expressed in colon, and at lower levels in ileum. In colon, found throughout the crypt and surface epithelium and in goblet cells (at protein level). Specific to the gastrointestinal tract; not detected in other tissues tested.

Its subcellular location is the secreted. Functionally, probable hormone. The protein is Resistin-like beta (Retnlb) of Mus musculus (Mouse).